A 346-amino-acid polypeptide reads, in one-letter code: NADH-ubiquinone oxidoreductase chain 2 (346 aa).

9 helical membrane-spanning segments follow: residues 7–27, 59–79, 93–115, 151–171, 178–198, 200–220, 242–262, 275–294, and 325–345; these read AIITSGLILGPIITMSSNHWI, YFLTQAMASYLMLSAALMNMW, ISCTTMTVAMSIKLAAAPFHFWF, TTLLIALGMTSILIGGWGGLN, IMAFSSIAHLGWMYAILTLSP, ILLLTFYLYVAMTATTFLMIN, TMMLLNLMSLAGLPPLTGFAP, LSMFASMMITSSLLSLYFYL, and LATITPLATALMPLLPTLKAI.

This sequence belongs to the complex I subunit 2 family.

The protein resides in the mitochondrion inner membrane. The catalysed reaction is a ubiquinone + NADH + 5 H(+)(in) = a ubiquinol + NAD(+) + 4 H(+)(out). Functionally, core subunit of the mitochondrial membrane respiratory chain NADH dehydrogenase (Complex I) that is believed to belong to the minimal assembly required for catalysis. Complex I functions in the transfer of electrons from NADH to the respiratory chain. The immediate electron acceptor for the enzyme is believed to be ubiquinone. The chain is NADH-ubiquinone oxidoreductase chain 2 (MT-ND2) from Pelomedusa subrufa (African side-necked turtle).